Here is a 161-residue protein sequence, read N- to C-terminus: Large ribosomal subunit protein uL30m (161 aa).

Residues 1–34 constitute a mitochondrion transit peptide; the sequence is MAGILRLVVQWPPGRLQTVTKGVESLICTDWIRH.

It belongs to the universal ribosomal protein uL30 family. Component of the mitochondrial large ribosomal subunit (mt-LSU). Mature mammalian 55S mitochondrial ribosomes consist of a small (28S) and a large (39S) subunit. The 28S small subunit contains a 12S ribosomal RNA (12S mt-rRNA) and 30 different proteins. The 39S large subunit contains a 16S rRNA (16S mt-rRNA), a copy of mitochondrial valine transfer RNA (mt-tRNA(Val)), which plays an integral structural role, and 52 different proteins.

It is found in the mitochondrion. The protein is Large ribosomal subunit protein uL30m (MRPL30) of Homo sapiens (Human).